A 349-amino-acid chain; its full sequence is Alanine racemase (349 aa).

Lys35 functions as the Proton acceptor; specific for D-alanine in the catalytic mechanism. Lys35 carries the N6-(pyridoxal phosphate)lysine modification. Arg130 is a binding site for substrate. The Proton acceptor; specific for L-alanine role is filled by Tyr244. A substrate-binding site is contributed by Met292.

Belongs to the alanine racemase family. Pyridoxal 5'-phosphate is required as a cofactor.

It carries out the reaction L-alanine = D-alanine. Its pathway is amino-acid biosynthesis; D-alanine biosynthesis; D-alanine from L-alanine: step 1/1. Its function is as follows. Catalyzes the interconversion of L-alanine and D-alanine. May also act on other amino acids. The chain is Alanine racemase (alr) from Cereibacter sphaeroides (strain ATCC 17025 / ATH 2.4.3) (Rhodobacter sphaeroides).